Here is a 139-residue protein sequence, read N- to C-terminus: FAD synthase (139 aa).

ATP is bound by residues 8–9 (VF), 13–16 (HPGH), aspartate 92, and tyrosine 119.

It belongs to the archaeal FAD synthase family. Homodimer. A divalent metal cation is required as a cofactor.

The catalysed reaction is FMN + ATP + H(+) = FAD + diphosphate. The protein operates within cofactor biosynthesis; FAD biosynthesis; FAD from FMN: step 1/1. Its function is as follows. Catalyzes the transfer of the AMP portion of ATP to flavin mononucleotide (FMN) to produce flavin adenine dinucleotide (FAD) coenzyme. This Picrophilus torridus (strain ATCC 700027 / DSM 9790 / JCM 10055 / NBRC 100828 / KAW 2/3) protein is FAD synthase.